The sequence spans 689 residues: Beta-adrenergic receptor kinase 1 (689 aa).

Residues 1 to 190 (MADLEAVLAD…ELNIHLTMND (190 aa)) form an N-terminal region. Residues 54-175 (TFEKIFSQKL…IESDKFTRFC (122 aa)) form the RGS domain. One can recognise a Protein kinase domain in the interval 191-453 (FSVHRIIGRG…AQEVKESPFF (263 aa)). Residues 197–205 (IGRGGFGEV) and K220 each bind ATP. D317 functions as the Proton acceptor in the catalytic mechanism. The region spanning 454–521 (RSLDWQMVFL…TISERWQQEV (68 aa)) is the AGC-kinase C-terminal domain. In terms of domain architecture, PH spans 558-652 (DCIVHGYMSK…WKKELRDAYR (95 aa)). A Phosphoserine modification is found at S670.

The protein belongs to the protein kinase superfamily. AGC Ser/Thr protein kinase family. GPRK subfamily. Interacts with the heterodimer formed by GNB1 and GNG2. Interacts with GIT1. Interacts with, and phosphorylates chemokine-stimulated CCR5. Interacts with ARRB1. Interacts with LPAR1 and LPAR2. Interacts with RALA in response to LPAR1 activation. ADRBK1 and RALA mutually inhibit each other's binding to LPAR1. Interacts with ADRB2.

It is found in the cytoplasm. The protein resides in the cell membrane. It localises to the postsynapse. Its subcellular location is the presynapse. The catalysed reaction is [beta-adrenergic receptor] + ATP = [beta-adrenergic receptor]-phosphate + ADP + H(+). With respect to regulation, in contrast to other AGC family kinases, the catalytic activity is solely regulated by the binding of substrates and ligands, not by phosphorylation of the kinase domain. Functionally, specifically phosphorylates the agonist-occupied form of the beta-adrenergic and closely related receptors, probably inducing a desensitization of them. Key regulator of LPAR1 signaling. Competes with RALA for binding to LPAR1 thus affecting the signaling properties of the receptor. Desensitizes LPAR1 and LPAR2 in a phosphorylation-independent manner. Positively regulates ciliary smoothened (SMO)-dependent Hedgehog (Hh) signaling pathway by facilitating the trafficking of SMO into the cilium and the stimulation of SMO activity. Inhibits relaxation of airway smooth muscle in response to blue light. This is Beta-adrenergic receptor kinase 1 from Mus musculus (Mouse).